An 85-amino-acid chain; its full sequence is Delta/kappa-theraphotoxin-Pm1a (85 aa).

The first 19 residues, 1-19, serve as a signal peptide directing secretion; sequence MKTFVFIVLVALAFVLTAA. Residues 20–43 constitute a propeptide that is removed on maturation; it reads KEERANPSELVSALAELVMLDAER. Cystine bridges form between cysteine 50–cysteine 64, cysteine 57–cysteine 69, and cysteine 63–cysteine 77.

The protein belongs to the neurotoxin 10 (Hwtx-1) family. Expressed by the venom gland.

The protein localises to the secreted. Multimodal toxin that enhances nociceptor excitability mainly by the simultaneous stimulation of repetitive firing (through Nav1.8/SCN10A channel current enhancement) and impairment of repolarization (by inhibiting delayed rectifier current of Kv2.1/KCNB1), with a potential contribution from tetrodotoxin-sensitive voltage-gated sodium channels (Nav) modified excitability. Enhances Nav1.8/SCN10A currents (EC(50)=1.1 uM), modifies the channel gating by a right-shift in steady-state inactivation and delays open-state inactivation. Also decreases Kv2.1/KCNB1 currents (IC(50)=0.43 uM) and causes a depolarizing shift in the voltage dependence of activation without change in steady-state inactivation. In addition, inhibits peak currents of human sodium channels (Nav1.1 to Nav1.7, IC(50)=0.38-2.3 uM) and delays fast inactivation of Nav1.1/SCN1A, Nav1.3/SCN3A, Nav1.6/SCN8A, and Nav1.7/SCN9A. In small dorsal root ganglion neurons, induces hyperexcitability by enhancing tetrodotoxin-resistant sodium currents, impairing repolarization and lowering the threshold of action potential firing, consistent with the severe pain associated with envenomation. In vivo, elicits nocifensive behavior in mice after intraplantar injection. The sequence is that of Delta/kappa-theraphotoxin-Pm1a from Pelinobius muticus (King baboon spider).